Reading from the N-terminus, the 142-residue chain is Large ribosomal subunit protein uL11 (142 aa).

It belongs to the universal ribosomal protein uL11 family. As to quaternary structure, part of the ribosomal stalk of the 50S ribosomal subunit. Interacts with L10 and the large rRNA to form the base of the stalk. L10 forms an elongated spine to which L12 dimers bind in a sequential fashion forming a multimeric L10(L12)X complex. Post-translationally, one or more lysine residues are methylated.

In terms of biological role, forms part of the ribosomal stalk which helps the ribosome interact with GTP-bound translation factors. In Mycobacterium tuberculosis (strain ATCC 25177 / H37Ra), this protein is Large ribosomal subunit protein uL11.